The sequence spans 143 residues: Large ribosomal subunit protein uL13c (143 aa).

The protein belongs to the universal ribosomal protein uL13 family. In terms of assembly, part of the 50S ribosomal subunit.

It localises to the plastid. The protein localises to the chloroplast. This chain is Large ribosomal subunit protein uL13c, found in Gracilaria tenuistipitata var. liui (Red alga).